Here is a 125-residue protein sequence, read N- to C-terminus: Multifunctional methyltransferase subunit TRM112-like protein (125 aa).

Residues lysine 2–serine 119 enclose the TRM112 domain. Phosphoserine occurs at positions 119 and 125.

This sequence belongs to the TRM112 family. In terms of assembly, part of the heterodimeric BUD23-TRM112 methyltransferase complex; this heterodimerization is necessary for the metabolic stability and activity of the catalytic subunit BUD23. Part of the heterodimeric N6AMT1-TRM112 methyltransferase complex; this heterodimerization is necessary for S-adenosyl-L-methionine-binding to N6AMT1/HEMK2. Part of the heterodimeric ALKBH8-TRM112 methyltransferase complex. Part of the heterodimeric METTL5-TRM112 methyltransferase complex; this heterodimerization is necessary for the stability of the catalytic subunit METTL5. Part of the heterodimeric THUMPD3-TRM112 methyltransferase complex; this complex forms an active tRNA methyltransferase, where TRMT112 acts as an activator of the catalytic subunit THUMPD3. Part of the heterodimeric THUMPD2-TRM112 methyltransferase complex; this complex forms an active tRNA methyltransferase, where TRMT112 acts as an activator of the catalytic subunit THUMPD2. Part of the heterodimeric TRMT11-TRM112 methyltransferase complex; this complex forms an active tRNA methyltransferase, where TRMT112 acts as an activator of the catalytic subunit TRMT11.

The protein resides in the nucleus. It localises to the nucleoplasm. Its subcellular location is the cytoplasm. It is found in the perinuclear region. Its function is as follows. Acts as an activator of both rRNA/tRNA and protein methyltransferases. Together with methyltransferase BUD23, methylates the N(7) position of a guanine in 18S rRNA. The heterodimer with N6AMT1/HEMK2 catalyzes N5-methylation of ETF1 on 'Gln-185', using S-adenosyl L-methionine as methyl donor. The heterodimer with N6AMT1/HEMK2 also monomethylates 'Lys-12' of histone H4 (H4K12me1). The heterodimer with ALKBH8 catalyzes the methylation of 5-carboxymethyl uridine to 5-methylcarboxymethyl uridine at the wobble position of the anticodon loop in target tRNA species. Together with methyltransferase THUMPD3, catalyzes the formation of N(2)-methylguanosine at position 6 in a broad range of tRNA substrates and at position 7 of tRNA(Trp). Involved in the pre-rRNA processing steps leading to small-subunit rRNA production. Together with methyltransferase METTL5, specifically methylates the 6th position of adenine in position 1832 of 18S rRNA. This Homo sapiens (Human) protein is Multifunctional methyltransferase subunit TRM112-like protein.